Consider the following 234-residue polypeptide: N-(5'-phosphoribosyl)anthranilate isomerase 1 (234 aa).

It belongs to the TrpF family.

The catalysed reaction is N-(5-phospho-beta-D-ribosyl)anthranilate = 1-(2-carboxyphenylamino)-1-deoxy-D-ribulose 5-phosphate. The protein operates within amino-acid biosynthesis; L-tryptophan biosynthesis; L-tryptophan from chorismate: step 3/5. This chain is N-(5'-phosphoribosyl)anthranilate isomerase 1 (trpF1), found in Methanosarcina mazei (strain ATCC BAA-159 / DSM 3647 / Goe1 / Go1 / JCM 11833 / OCM 88) (Methanosarcina frisia).